We begin with the raw amino-acid sequence, 601 residues long: NADPH--cytochrome P450 reductase (601 aa).

One can recognise a Flavodoxin-like domain in the interval 25–169 (IVVFYGSQTG…DFVTWREQFW (145 aa)). FMN contacts are provided by residues 31 to 36 (SQTGTG), 83 to 86 (ATYG), 118 to 127 (LGDKTYEHYN), and aspartate 153. The FAD-binding FR-type domain occupies 224 to 425 (KNPFLAPVTV…ICAVLVEYXT (202 aa)). FAD-binding positions include 399–402 (RYYS), 417–419 (CAV), tyrosine 423, and 427–430 (GVAT). NADP(+) is bound by residues threonine 458, 519–520 (SR), 525–529 (KVYVQ), and aspartate 562. Tryptophan 600 serves as a coordination point for FAD.

Belongs to the NADPH--cytochrome P450 reductase family. This sequence in the N-terminal section; belongs to the flavodoxin family. It in the C-terminal section; belongs to the flavoprotein pyridine nucleotide cytochrome reductase family. Requires FAD as cofactor. FMN is required as a cofactor.

Its subcellular location is the endoplasmic reticulum membrane. The catalysed reaction is 2 oxidized [cytochrome P450] + NADPH = 2 reduced [cytochrome P450] + NADP(+) + H(+). This enzyme is required for electron transfer from NADP to cytochrome P450 in microsomes. It can also provide electron transfer to heme oxygenase and cytochrome B5. This is NADPH--cytochrome P450 reductase from Salmo trutta (Brown trout).